Here is a 552-residue protein sequence, read N- to C-terminus: Putative transport protein ECA4401 (552 aa).

5 consecutive transmembrane segments (helical) span residues Ile-4 to Trp-24, Ile-26 to Val-46, Phe-65 to Ser-85, Gly-90 to His-112, and Thr-158 to Met-178. RCK C-terminal domains follow at residues Lys-191 to Asn-276 and Glu-279 to Asn-361. Transmembrane regions (helical) follow at residues Met-371–Val-391, Gly-393–Leu-413, Ile-439–Leu-459, Val-464–Leu-484, Tyr-493–Ala-513, and Val-530–Leu-550.

The protein belongs to the AAE transporter (TC 2.A.81) family. YidE subfamily.

It is found in the cell membrane. The chain is Putative transport protein ECA4401 from Pectobacterium atrosepticum (strain SCRI 1043 / ATCC BAA-672) (Erwinia carotovora subsp. atroseptica).